A 448-amino-acid polypeptide reads, in one-letter code: Asparagine--tRNA ligase (448 aa).

It belongs to the class-II aminoacyl-tRNA synthetase family. Homodimer.

Its subcellular location is the cytoplasm. The catalysed reaction is tRNA(Asn) + L-asparagine + ATP = L-asparaginyl-tRNA(Asn) + AMP + diphosphate + H(+). The polypeptide is Asparagine--tRNA ligase (Streptococcus pyogenes serotype M4 (strain MGAS10750)).